The chain runs to 258 residues: Large ribosomal subunit protein bL21 (258 aa).

Over residues 140–159 the composition is skewed to basic and acidic residues; that stretch reads KAKDAKDEAPKAAPKAEKKK. Positions 140 to 181 are disordered; it reads KAKDAKDEAPKAAPKAEKKKAAPKKAKAEAAPAAADEGTRPA.

It belongs to the bacterial ribosomal protein bL21 family. As to quaternary structure, part of the 50S ribosomal subunit. Contacts protein L20.

This protein binds to 23S rRNA in the presence of protein L20. This Jannaschia sp. (strain CCS1) protein is Large ribosomal subunit protein bL21.